A 324-amino-acid chain; its full sequence is Rho crystallin (324 aa).

T2 carries the N-acetylthreonine modification. Position 218–281 (218–281 (SVLGSHRDRN…SFTPARIKQN (64 aa))) interacts with NADP(+).

It belongs to the aldo/keto reductase family. In terms of assembly, monomer.

This is Rho crystallin from Rana temporaria (European common frog).